The following is a 141-amino-acid chain: Proteasome maturation protein (141 aa).

Lysine 39 is covalently cross-linked (Glycyl lysine isopeptide (Lys-Gly) (interchain with G-Cter in SUMO2)). The High-affinity association with the preproteasome motif lies at 68 to 72 (RNIQG).

It belongs to the POMP/UMP1 family. In terms of assembly, constituent of preproteasomes, but not of mature 20S proteasomes. Within the preproteasome, may directly interact with PSMB1/beta6, PSMB4/beta7, PSMB5/beta5, PSMB6/beta1 and PSMB9/beta1i. Interaction with PSMB8/beta5i has been observed in PubMed:10973495, but not in PubMed:10926487. Forms tetramers. In terms of tissue distribution, strongly expressed from the basal layer to the granular layer of healthy epidermis, whereas in KLICK patients there is a gradual decrease of expression toward the granular layer.

Its subcellular location is the cytoplasm. The protein resides in the cytosol. It is found in the nucleus. It localises to the microsome membrane. Its function is as follows. Molecular chaperone essential for the assembly of standard proteasomes and immunoproteasomes. Degraded after completion of proteasome maturation. Mediates the association of 20S preproteasome with the endoplasmic reticulum. This is Proteasome maturation protein from Homo sapiens (Human).